Reading from the N-terminus, the 201-residue chain is Adenylyl-sulfate kinase (201 aa).

An ATP-binding site is contributed by 35–42 (GLSGSGKS). The active-site Phosphoserine intermediate is the serine 109.

It belongs to the APS kinase family.

The enzyme catalyses adenosine 5'-phosphosulfate + ATP = 3'-phosphoadenylyl sulfate + ADP + H(+). It functions in the pathway sulfur metabolism; hydrogen sulfide biosynthesis; sulfite from sulfate: step 2/3. In terms of biological role, catalyzes the synthesis of activated sulfate. The chain is Adenylyl-sulfate kinase from Salmonella paratyphi C (strain RKS4594).